Reading from the N-terminus, the 310-residue chain is Syndecan-1 (310 aa).

The signal sequence occupies residues 1-22; sequence MRRAALWLWLCALALSLQPALP. Topologically, residues 23–254 are extracellular; the sequence is QIVATNLPPE…GLLDRKEVLG (232 aa). 2 disordered regions span residues 27–100 and 114–212; these read TNLP…EGPK and LTAR…QDFT. Residues 32–42 are compositionally biased toward acidic residues; that stretch reads EDQDGSGDDSD. O-linked (Xyl...) (chondroitin sulfate) serine glycosylation occurs at serine 37. An N-linked (GlcNAc...) asparagine glycan is attached at asparagine 43. O-linked (Xyl...) (heparan sulfate) serine glycans are attached at residues serine 45 and serine 47. Over residues 55–75 the composition is skewed to polar residues; it reads ITLSQQTPSTWKDTQLLTAIP. The segment covering 117-127 has biased composition (basic and acidic residues); sequence REQEATPRPRE. Residues 128 to 151 show a composition bias toward low complexity; it reads TTQLPTTHLASTTTATTAQEPATS. The segment covering 153–164 has biased composition (basic and acidic residues); it reads PHRDMQPGHHET. O-linked (Xyl...) (chondroitin sulfate) serine glycosylation is found at serine 206 and serine 216. The chain crosses the membrane as a helical span at residues 255–275; that stretch reads GVIAGGLVGLIFAVCLVGFML. Over 276 to 310 the chain is Cytoplasmic; sequence YRMKKKDEGSYSLEEPKQANGGAYQKPTKQEEFYA. The interval 284–310 is disordered; the sequence is GSYSLEEPKQANGGAYQKPTKQEEFYA. Serine 285 bears the Phosphoserine mark.

The protein belongs to the syndecan proteoglycan family. As to quaternary structure, interacts with CDCP1. Interacts (via C-terminus) with TIAM1 (via PDZ domain). Interacts with MDK. Post-translationally, shedding is enhanced by a number of factors such as heparanase, thrombin or EGF. Also by stress and wound healing. PMA-mediated shedding is inhibited by TIMP3. In terms of tissue distribution, detected in placenta (at protein level). Detected in fibroblasts (at protein level).

Its subcellular location is the membrane. The protein resides in the secreted. The protein localises to the extracellular exosome. Its function is as follows. Cell surface proteoglycan that contains both heparan sulfate and chondroitin sulfate and that links the cytoskeleton to the interstitial matrix. Regulates exosome biogenesis in concert with SDCBP and PDCD6IP. Able to induce its own expression in dental mesenchymal cells and also in the neighboring dental epithelial cells via an MSX1-mediated pathway. The chain is Syndecan-1 from Homo sapiens (Human).